A 101-amino-acid polypeptide reads, in one-letter code: Small ribosomal subunit protein uS14A (101 aa).

Residues 32–71 form a disordered region; it reads RRPGTPEPERNRAVEELRRQPRDASATRVRNRDSVDGRPR. 2 stretches are compositionally biased toward basic and acidic residues: residues 38 to 53 and 61 to 70; these read EPER…RQPR and RNRDSVDGRP.

It belongs to the universal ribosomal protein uS14 family. As to quaternary structure, part of the 30S ribosomal subunit. Contacts proteins S3 and S10.

Its function is as follows. Binds 16S rRNA, required for the assembly of 30S particles and may also be responsible for determining the conformation of the 16S rRNA at the A site. This is Small ribosomal subunit protein uS14A from Streptomyces griseus subsp. griseus (strain JCM 4626 / CBS 651.72 / NBRC 13350 / KCC S-0626 / ISP 5235).